The sequence spans 160 residues: Cytochrome b6-f complex subunit 4 (160 aa).

A run of 3 helical transmembrane segments spans residues 36–56 (LLYVFPVCILGTFACCIGLAV), 95–115 (LLGVLAMARVPAGLITVPFIE), and 131–151 (LVFILGFFTAVWLGIGACLPI).

This sequence belongs to the cytochrome b family. PetD subfamily. In terms of assembly, the 4 large subunits of the cytochrome b6-f complex are cytochrome b6, subunit IV (17 kDa polypeptide, petD), cytochrome f and the Rieske protein, while the 4 small subunits are petG, petL, petM and petN. The complex functions as a dimer.

It is found in the plastid. Its subcellular location is the chloroplast thylakoid membrane. Component of the cytochrome b6-f complex, which mediates electron transfer between photosystem II (PSII) and photosystem I (PSI), cyclic electron flow around PSI, and state transitions. This Trieres chinensis (Marine centric diatom) protein is Cytochrome b6-f complex subunit 4.